A 130-amino-acid polypeptide reads, in one-letter code: Large ribosomal subunit protein bL19 (130 aa).

It belongs to the bacterial ribosomal protein bL19 family.

In terms of biological role, this protein is located at the 30S-50S ribosomal subunit interface and may play a role in the structure and function of the aminoacyl-tRNA binding site. This is Large ribosomal subunit protein bL19 from Burkholderia lata (strain ATCC 17760 / DSM 23089 / LMG 22485 / NCIMB 9086 / R18194 / 383).